The primary structure comprises 262 residues: Small ribosomal subunit protein mS23 (262 aa).

Over residues 242–254 the composition is skewed to acidic residues; it reads AAEEQETSLDDDA. The interval 242 to 262 is disordered; it reads AAEEQETSLDDDATEKVAVAA.

The protein belongs to the mitochondrion-specific ribosomal protein mS23 family. Component of the mitochondrial small ribosomal subunit.

It localises to the mitochondrion. This chain is Small ribosomal subunit protein mS23 (rsm25), found in Aspergillus niger (strain ATCC MYA-4892 / CBS 513.88 / FGSC A1513).